A 384-amino-acid chain; its full sequence is S-adenosylmethionine synthase (384 aa).

H15 provides a ligand contact to ATP. Residue D17 participates in Mg(2+) binding. K(+) is bound at residue E43. L-methionine is bound by residues E56 and Q99. Positions 99 to 109 (QSPDINQGVDR) are flexible loop. Residues 164 to 166 (DAK), 230 to 231 (RF), D239, 245 to 246 (RK), A262, and K266 each bind ATP. D239 serves as a coordination point for L-methionine. Residue K270 participates in L-methionine binding.

It belongs to the AdoMet synthase family. As to quaternary structure, homotetramer; dimer of dimers. The cofactor is Mg(2+). It depends on K(+) as a cofactor.

The protein resides in the cytoplasm. It carries out the reaction L-methionine + ATP + H2O = S-adenosyl-L-methionine + phosphate + diphosphate. Its pathway is amino-acid biosynthesis; S-adenosyl-L-methionine biosynthesis; S-adenosyl-L-methionine from L-methionine: step 1/1. In terms of biological role, catalyzes the formation of S-adenosylmethionine (AdoMet) from methionine and ATP. The overall synthetic reaction is composed of two sequential steps, AdoMet formation and the subsequent tripolyphosphate hydrolysis which occurs prior to release of AdoMet from the enzyme. The chain is S-adenosylmethionine synthase from Klebsiella pneumoniae subsp. pneumoniae (strain ATCC 700721 / MGH 78578).